The primary structure comprises 128 residues: Elongation factor G (128 aa).

This sequence belongs to the GTP-binding elongation factor family. EF-G/EF-2 subfamily.

The protein resides in the cytoplasm. Catalyzes the GTP-dependent ribosomal translocation step during translation elongation. During this step, the ribosome changes from the pre-translocational (PRE) to the post-translocational (POST) state as the newly formed A-site-bound peptidyl-tRNA and P-site-bound deacylated tRNA move to the P and E sites, respectively. Catalyzes the coordinated movement of the two tRNA molecules, the mRNA and conformational changes in the ribosome. The chain is Elongation factor G (fusA) from Planobispora rosea.